A 371-amino-acid chain; its full sequence is Forkhead box protein J1.2 (371 aa).

Disordered regions lie at residues 45–74 (ANSRPPLPRASQGPCSPPAGDTASCQAPRT) and 80–99 (VAVPTAWASLPTPSPSPVQE). The segment at residues 109 to 203 (KPPYSYATLI…VNGVLKRRRM (95 aa)) is a DNA-binding region (fork-head). The interval 228–248 (PSSHHMQHISGGHRQSRRYEK) is disordered.

Belongs to the FOXJ1 family. Expressed diffusely through much of gastrula and neurula stage embryos. At stage 23 (late neurula), limited to the otic vesicle. By stage 28 (tailbud), also expressed transiently in the presumptive nephrostomes of the pronephros. At stage 35 (early tadpole), expressed broadly in the head and strongly expressed in the developing gill structures.

It localises to the nucleus. Functionally, key transcription factor required for motile ciliogenesis. Activates genes essential for motile cilia formation and function. The chain is Forkhead box protein J1.2 from Xenopus tropicalis (Western clawed frog).